The following is a 369-amino-acid chain: MELEFFKPPLYQQRYQFVKSYVDTYKPKKVADLGCSTCSLLHTLRFWDCIKVLVGLDIDEDVLSRKKFTLTPLPAHYLEPRNTSLTINLYQGSVTQKDPALLGFDLITCIELIEHLEAEELENFREVLFGFMAPITVIISTPNAEFNILFPKCTGFRHPDHKFEWNRREFQSWATEVAKCFNYTVEITGVGEPPRDSKNVGFCSQIAVFTRNYTESEESLQRKMECKSVYKTVLHIVYPSLQEEKYLRRAVQKVALFHAYQIKANFLQQFIHREEEEEPHNTDTEHRPCMDLKLTSRWPTLPQTEQDESMEPFLQEDTLYVPLKKIFSVPKVKELCGNMDNLRTMITGEATLSNDGNAILYHIDLENSC.

Positions 39, 57, and 93 each coordinate S-adenosyl-L-methionine. Residues E111, E114, H115, and H161 each contribute to the Mg(2+) site.

The protein belongs to the methyltransferase superfamily. HEN1 family. Mg(2+) serves as cofactor.

It is found in the cytoplasm. The enzyme catalyses small RNA 3'-end nucleotide + S-adenosyl-L-methionine = small RNA 3'-end 2'-O-methylnucleotide + S-adenosyl-L-homocysteine + H(+). Functionally, methyltransferase that adds a 2'-O-methyl group at the 3'-end of piRNAs, a class of 24 to 30 nucleotide RNAs that are generated by a Dicer-independent mechanism and are primarily derived from transposons and other repeated sequence elements. This probably protects the 3'-end of piRNAs from uridylation activity and subsequent degradation. Stabilization of piRNAs is essential for gametogenesis. The sequence is that of Small RNA 2'-O-methyltransferase (henmt1) from Xenopus tropicalis (Western clawed frog).